Reading from the N-terminus, the 337-residue chain is Fructose-1,6-bisphosphatase class 1 (337 aa).

Residues E94, D116, L118, and D119 each contribute to the Mg(2+) site. Substrate contacts are provided by residues 119–122, N210, and K276; that span reads DGSS. E282 contacts Mg(2+).

This sequence belongs to the FBPase class 1 family. Homotetramer. Mg(2+) serves as cofactor.

Its subcellular location is the cytoplasm. The enzyme catalyses beta-D-fructose 1,6-bisphosphate + H2O = beta-D-fructose 6-phosphate + phosphate. The protein operates within carbohydrate biosynthesis; gluconeogenesis. The sequence is that of Fructose-1,6-bisphosphatase class 1 from Burkholderia lata (strain ATCC 17760 / DSM 23089 / LMG 22485 / NCIMB 9086 / R18194 / 383).